Reading from the N-terminus, the 244-residue chain is 1-(5-phosphoribosyl)-5-[(5-phosphoribosylamino)methylideneamino] imidazole-4-carboxamide isomerase (244 aa).

The Proton acceptor role is filled by D10. D132 (proton donor) is an active-site residue.

The protein belongs to the HisA/HisF family.

The protein resides in the cytoplasm. The enzyme catalyses 1-(5-phospho-beta-D-ribosyl)-5-[(5-phospho-beta-D-ribosylamino)methylideneamino]imidazole-4-carboxamide = 5-[(5-phospho-1-deoxy-D-ribulos-1-ylimino)methylamino]-1-(5-phospho-beta-D-ribosyl)imidazole-4-carboxamide. Its pathway is amino-acid biosynthesis; L-histidine biosynthesis; L-histidine from 5-phospho-alpha-D-ribose 1-diphosphate: step 4/9. The chain is 1-(5-phosphoribosyl)-5-[(5-phosphoribosylamino)methylideneamino] imidazole-4-carboxamide isomerase from Xanthomonas campestris pv. campestris (strain 8004).